The primary structure comprises 288 residues: NAD(P)H-hydrate epimerase (288 aa).

The N-terminal 48 residues, 1–48 (MSALRALLGLGLLAAGSRLRRVPGRAGACPAGSAWWEARRPHSGGGGE), are a transit peptide targeting the mitochondrion. A YjeF N-terminal domain is found at 65 to 275 (AQAVDEELFN…ALEKKYQLNL (211 aa)). 119–123 (NNGGD) contacts (6S)-NADPHX. Asparagine 120 is a K(+) binding site. At lysine 144 the chain carries N6-succinyllysine. Aspartate 185 provides a ligand contact to K(+). (6S)-NADPHX-binding positions include 189 to 195 (GFSFKGD) and aspartate 218. A K(+)-binding site is contributed by serine 221.

This sequence belongs to the NnrE/AIBP family. As to quaternary structure, homodimer. Interacts with APOA1 and APOA2. Requires K(+) as cofactor. Undergoes physiological phosphorylation during sperm capacitation, downstream to PKA activation.

Its subcellular location is the mitochondrion. The protein localises to the secreted. It carries out the reaction (6R)-NADHX = (6S)-NADHX. The enzyme catalyses (6R)-NADPHX = (6S)-NADPHX. In terms of biological role, catalyzes the epimerization of the S- and R-forms of NAD(P)HX, a damaged form of NAD(P)H that is a result of enzymatic or heat-dependent hydration. This is a prerequisite for the S-specific NAD(P)H-hydrate dehydratase to allow the repair of both epimers of NAD(P)HX. Accelerates cholesterol efflux from endothelial cells to high-density lipoprotein (HDL) and thereby regulates angiogenesis. In Canis lupus familiaris (Dog), this protein is NAD(P)H-hydrate epimerase.